Here is a 195-residue protein sequence, read N- to C-terminus: Large ribosomal subunit protein bL17 (195 aa).

The disordered stretch occupies residues 125–195 (ANRARRVGAS…PTQDSDADKS (71 aa)). Residues 136–152 (QTAPVAAAAAPQAAVEP) show a composition bias toward low complexity. Composition is skewed to acidic residues over residues 153–173 (EATE…EDTT) and 183–195 (TDDP…ADKS).

The protein belongs to the bacterial ribosomal protein bL17 family. In terms of assembly, part of the 50S ribosomal subunit. Contacts protein L32.

This is Large ribosomal subunit protein bL17 from Mycobacterium sp. (strain JLS).